A 149-amino-acid polypeptide reads, in one-letter code: L-alanine exporter AlaE (149 aa).

4 helical membrane-spanning segments follow: residues 16 to 36 (FAMV…LSGM), 46 to 66 (LVAI…RDLI), 85 to 105 (VLAY…TVGA), and 112 to 132 (AAVS…GYFL).

It belongs to the AlaE exporter family.

It is found in the cell inner membrane. Its function is as follows. Exports L-alanine. The polypeptide is L-alanine exporter AlaE (Salmonella arizonae (strain ATCC BAA-731 / CDC346-86 / RSK2980)).